A 57-amino-acid chain; its full sequence is Large ribosomal subunit protein bL32 (57 aa).

The protein belongs to the bacterial ribosomal protein bL32 family.

This Staphylococcus saprophyticus subsp. saprophyticus (strain ATCC 15305 / DSM 20229 / NCIMB 8711 / NCTC 7292 / S-41) protein is Large ribosomal subunit protein bL32.